Reading from the N-terminus, the 256-residue chain is Homeobox-leucine zipper protein HOX18 (256 aa).

The segment at 52 to 117 (YDHGRDEEQA…GGGGGTRKKL (66 aa)) is disordered. Residues 102–112 (DGGSGSGGGGG) show a composition bias toward gly residues. The homeobox DNA-binding region spans 112 to 171 (GTRKKLQLTKEQSTLLEDSFRVHNILSHAQKHELARQLKLKPRQVEVWFQNRRARTKLKQ). A leucine-zipper region spans residues 170-214 (KQTEVDCEFLKRCCESLTEENKQLKHELMELRRLASAAAAAAGSQ).

This sequence belongs to the HD-ZIP homeobox family. Class II subfamily. Expressed in roots, leaf sheaths and blades and panicles.

It is found in the nucleus. Probable transcription factor. In Oryza sativa subsp. indica (Rice), this protein is Homeobox-leucine zipper protein HOX18 (HOX18).